Here is a 429-residue protein sequence, read N- to C-terminus: Enolase (429 aa).

Gln168 is a binding site for (2R)-2-phosphoglycerate. Glu210 serves as the catalytic Proton donor. The Mg(2+) site is built by Asp247, Glu288, and Asp315. (2R)-2-phosphoglycerate contacts are provided by Lys340, Arg369, Ser370, and Lys391. Lys340 acts as the Proton acceptor in catalysis.

The protein belongs to the enolase family. It depends on Mg(2+) as a cofactor.

It is found in the cytoplasm. It localises to the secreted. The protein resides in the cell surface. It carries out the reaction (2R)-2-phosphoglycerate = phosphoenolpyruvate + H2O. It functions in the pathway carbohydrate degradation; glycolysis; pyruvate from D-glyceraldehyde 3-phosphate: step 4/5. Functionally, catalyzes the reversible conversion of 2-phosphoglycerate (2-PG) into phosphoenolpyruvate (PEP). It is essential for the degradation of carbohydrates via glycolysis. The sequence is that of Enolase from Trichormus variabilis (strain ATCC 29413 / PCC 7937) (Anabaena variabilis).